A 375-amino-acid polypeptide reads, in one-letter code: Succinyl-diaminopimelate desuccinylase (375 aa).

Residue histidine 66 participates in Zn(2+) binding. Residue aspartate 68 is part of the active site. Aspartate 99 is a Zn(2+) binding site. Glutamate 133 serves as the catalytic Proton acceptor. Residues glutamate 134, glutamate 162, and histidine 348 each contribute to the Zn(2+) site.

This sequence belongs to the peptidase M20A family. DapE subfamily. In terms of assembly, homodimer. Zn(2+) serves as cofactor. The cofactor is Co(2+).

It catalyses the reaction N-succinyl-(2S,6S)-2,6-diaminopimelate + H2O = (2S,6S)-2,6-diaminopimelate + succinate. It participates in amino-acid biosynthesis; L-lysine biosynthesis via DAP pathway; LL-2,6-diaminopimelate from (S)-tetrahydrodipicolinate (succinylase route): step 3/3. Catalyzes the hydrolysis of N-succinyl-L,L-diaminopimelic acid (SDAP), forming succinate and LL-2,6-diaminopimelate (DAP), an intermediate involved in the bacterial biosynthesis of lysine and meso-diaminopimelic acid, an essential component of bacterial cell walls. The protein is Succinyl-diaminopimelate desuccinylase of Salmonella typhi.